We begin with the raw amino-acid sequence, 629 residues long: Proteoglycan Cow (629 aa).

Positions 1-27 (MKHSPLIASACLALVLMSSSLIGSTEA) are cleaved as a signal peptide. Disordered stretches follow at residues 118–186 (KRRV…ESKE) and 198–223 (GDKQQQQQQLSQPAAGPSVIQQDDDE). Over residues 128 to 143 (DSQDAEDINNDDEDNS) the composition is skewed to acidic residues. Asn-142 carries an N-linked (GlcNAc...) asparagine glycan. Low complexity predominate over residues 144–159 (SDGGSSNSSPTGTNNA). Residues 167-186 (EETDDEDKSLSLGDDDESKE) show a composition bias toward acidic residues. The Kazal-like domain maps to 222–273 (DEELDNCKPCPVAKPTFLCGADNRTYSSLCRLDYHNCIHSTSIRIACKGFCP). Cystine bridges form between Cys-228–Cys-258, Cys-231–Cys-251, and Cys-240–Cys-272. N-linked (GlcNAc...) asparagine glycosylation is present at Asn-244. Residues 298-356 (SLDQQQQQQQQQQQQQQQQQAYKDSNNNNIMMNSGNIMGGNNNDFNTIMNDKEDNNRHN) are disordered. A compositionally biased stretch (low complexity) spans 301 to 340 (QQQQQQQQQQQQQQQQQAYKDSNNNNIMMNSGNIMGGNNN). EF-hand domains lie at 468 to 503 (ACKTEAKWMFGHLDLNNDGQLSLQEMYDLEHDQNER) and 508 to 535 (FIDTCDLDTDSSINTREWCRCFEKTDRP). Positions 481, 483, 485, 487, and 492 each coordinate Ca(2+). The 62-residue stretch at 533-594 (DRPCAAVRRR…NTRTRGKPNC (62 aa)) folds into the Thyroglobulin type-1 domain. 3 cysteine pairs are disulfide-bonded: Cys-536/Cys-555, Cys-566/Cys-573, and Cys-575/Cys-594. The interval 602 to 629 (ASLTSDDEDEGADDEDSAEGSADQMLVF) is disordered. Residues 606-619 (SDDEDEGADDEDSA) are compositionally biased toward acidic residues. A compositionally biased stretch (low complexity) spans 620 to 629 (EGSADQMLVF).

Interacts (in heparan sulfate-bound form) with wg. In terms of processing, contains heparan sulfate O-linked oligosaccharides. In the wing disk, detected throughout the disk where it is localized primarily to the apical surface but is also present at the basal surface (at protein level).

It localises to the secreted. Binds to the Wnt signaling protein wg, stabilizes it and promotes its extracellular distribution. This is required for establishment of a wg gradient during development to allow for regulation of target genes at different levels. The polypeptide is Proteoglycan Cow (Drosophila melanogaster (Fruit fly)).